We begin with the raw amino-acid sequence, 632 residues long: Putative acetyl-CoA decarbonylase/synthase complex subunit alpha-like (632 aa).

[Ni-4Fe-4S] cluster is bound by residues histidine 200, histidine 226, cysteine 263, cysteine 379, cysteine 408, and cysteine 438.

It belongs to the Ni-containing carbon monoxide dehydrogenase family.

In terms of biological role, part of the ACDS complex that catalyzes the reversible cleavage of acetyl-CoA, allowing autotrophic growth from CO(2). The alpha-epsilon subcomponent functions as a carbon monoxide dehydrogenase. This chain is Putative acetyl-CoA decarbonylase/synthase complex subunit alpha-like (cdhA2), found in Methanopyrus kandleri (strain AV19 / DSM 6324 / JCM 9639 / NBRC 100938).